Consider the following 233-residue polypeptide: Attacin-B (233 aa).

The signal sequence occupies residues 1–17 (MFAKLFLVSVLLVGVNS). Positions 18-46 (RYVLVEEPGYYDKQYEEQPQQWVNSRVRR) are excised as a propeptide.

The protein belongs to the attacin/sarcotoxin-2 family.

The protein localises to the secreted. In terms of biological role, hemolymph antibacterial protein. This Hyalophora cecropia (Cecropia moth) protein is Attacin-B.